Consider the following 137-residue polypeptide: Small ribosomal subunit protein uS12 (137 aa).

A disordered region spans residues 1–57; the sequence is MPTINQLVRKPRKSKVEKSKSPALNVGYNSRKKVQTNVSSPQKRGVATRVGTMTPKK. Asp102 carries the post-translational modification 3-methylthioaspartic acid.

This sequence belongs to the universal ribosomal protein uS12 family. As to quaternary structure, part of the 30S ribosomal subunit. Contacts proteins S8 and S17. May interact with IF1 in the 30S initiation complex.

Functionally, with S4 and S5 plays an important role in translational accuracy. In terms of biological role, interacts with and stabilizes bases of the 16S rRNA that are involved in tRNA selection in the A site and with the mRNA backbone. Located at the interface of the 30S and 50S subunits, it traverses the body of the 30S subunit contacting proteins on the other side and probably holding the rRNA structure together. The combined cluster of proteins S8, S12 and S17 appears to hold together the shoulder and platform of the 30S subunit. This Streptococcus suis (strain 98HAH33) protein is Small ribosomal subunit protein uS12.